The sequence spans 234 residues: LexA repressor (234 aa).

Positions 1 to 29 (MSDAANPEGHKRSLPGRPPGIRADSSGLT) are disordered. The segment at residues 52-72 (MREIGQAVGLSSTSSVAHQLM) is a DNA-binding region (H-T-H motif). A disordered region spans residues 90-109 (YEVRGSDQAASVQPTDTAGK). Catalysis depends on for autocatalytic cleavage activity residues S158 and K195.

This sequence belongs to the peptidase S24 family. Homodimer.

It catalyses the reaction Hydrolysis of Ala-|-Gly bond in repressor LexA.. Represses a number of genes involved in the response to DNA damage (SOS response), including recA and lexA. In the presence of single-stranded DNA, RecA interacts with LexA causing an autocatalytic cleavage which disrupts the DNA-binding part of LexA, leading to derepression of the SOS regulon and eventually DNA repair. This Streptomyces coelicolor (strain ATCC BAA-471 / A3(2) / M145) protein is LexA repressor.